Consider the following 668-residue polypeptide: Bifunctional polymyxin resistance protein ArnA (668 aa).

The formyltransferase ArnAFT stretch occupies residues 1 to 307; it reads MSNKAVVFAY…ELGLVDGSLL (307 aa). Histidine 106 serves as the catalytic Proton donor; for formyltransferase activity. (6R)-10-formyltetrahydrofolate-binding positions include arginine 116 and 138-142; that span reads VKRAD. The interval 317–668 is dehydrogenase ArnADH; it reads RRTRVLILGV…IADRAKQEAR (352 aa). NAD(+)-binding positions include aspartate 350 and 371 to 372; that span reads DI. UDP-alpha-D-glucuronate-binding positions include alanine 396, tyrosine 401, and 435–436; that span reads TS. Glutamate 437 functions as the Proton acceptor; for decarboxylase activity in the catalytic mechanism. Residues arginine 463, asparagine 494, 528–537, and tyrosine 615 each bind UDP-alpha-D-glucuronate; that span reads RLFDGGEQKR. Residue arginine 621 is the Proton donor; for decarboxylase activity of the active site.

The protein in the N-terminal section; belongs to the Fmt family. UDP-L-Ara4N formyltransferase subfamily. This sequence in the C-terminal section; belongs to the NAD(P)-dependent epimerase/dehydratase family. UDP-glucuronic acid decarboxylase subfamily. As to quaternary structure, homohexamer, formed by a dimer of trimers.

The catalysed reaction is UDP-alpha-D-glucuronate + NAD(+) = UDP-beta-L-threo-pentopyranos-4-ulose + CO2 + NADH. It catalyses the reaction UDP-4-amino-4-deoxy-beta-L-arabinose + (6R)-10-formyltetrahydrofolate = UDP-4-deoxy-4-formamido-beta-L-arabinose + (6S)-5,6,7,8-tetrahydrofolate + H(+). The protein operates within nucleotide-sugar biosynthesis; UDP-4-deoxy-4-formamido-beta-L-arabinose biosynthesis; UDP-4-deoxy-4-formamido-beta-L-arabinose from UDP-alpha-D-glucuronate: step 1/3. It participates in nucleotide-sugar biosynthesis; UDP-4-deoxy-4-formamido-beta-L-arabinose biosynthesis; UDP-4-deoxy-4-formamido-beta-L-arabinose from UDP-alpha-D-glucuronate: step 3/3. Its pathway is bacterial outer membrane biogenesis; lipopolysaccharide biosynthesis. In terms of biological role, bifunctional enzyme that catalyzes the oxidative decarboxylation of UDP-glucuronic acid (UDP-GlcUA) to UDP-4-keto-arabinose (UDP-Ara4O) and the addition of a formyl group to UDP-4-amino-4-deoxy-L-arabinose (UDP-L-Ara4N) to form UDP-L-4-formamido-arabinose (UDP-L-Ara4FN). The modified arabinose is attached to lipid A and is required for resistance to polymyxin and cationic antimicrobial peptides. The polypeptide is Bifunctional polymyxin resistance protein ArnA (Pseudomonas fluorescens (strain ATCC BAA-477 / NRRL B-23932 / Pf-5)).